A 1505-amino-acid polypeptide reads, in one-letter code: Probable serine/threonine-protein kinase DDB_G0280133 (1505 aa).

PAS domains follow at residues 2–72 (NTHN…FETG), 108–178 (RMFI…YHGG), and 215–284 (DMFK…TDSH). Disordered stretches follow at residues 282-348 (DSHD…FNHS) and 398-533 (RVYG…ESSY). 2 stretches are compositionally biased toward low complexity: residues 289 to 314 (QQQQQTTTTTTTTTTTTSTTSTTTST) and 328 to 344 (SSPPIDSPLTTPSTPTT). Composition is skewed to basic and acidic residues over residues 398 to 407 (RVYGKDKDKN) and 415 to 430 (ENKDGKQLDTIKESKE). Positions 431 to 443 (HRHSKEKKKRKKD) are enriched in basic residues. Residues 448 to 468 (NNNNNNNNNNNNNNEQTSDSS) show a composition bias toward low complexity. Basic residues predominate over residues 479-489 (SKKKRSSKKKS). A compositionally biased stretch (low complexity) spans 515-532 (SSNSSSNSSHSNAPHESS). Positions 542–805 (YTLGKTLGRG…IMNVLNHPWL (264 aa)) constitute a Protein kinase domain. Residues 548–556 (LGRGNYGVV) and K571 each bind ATP. The active-site Proton acceptor is the D684. The span at 855 to 960 (NILNNNNNNN…NNTNSIINNN (106 aa)) shows a compositional bias: low complexity. 3 disordered regions span residues 855–1048 (NILN…SHQQ), 1072–1091 (QPNQQVSFDTNQSYQQQLQQ), and 1181–1358 (QQQQ…DEEN). Residues 903-939 (NNNNNINNNINNNNNVNNNVNNNKNNNNNNNNNSNNN) are a coiled coil. Positions 961–974 (LYNQSLSPQNNNIY) are enriched in polar residues. Low complexity-rich tracts occupy residues 975 to 1013 (QHSPQHQQHQHQQQHSPQQQQHQQHQHHQQQQQQLQQQH) and 1022 to 1048 (QQHQQQHQQQHQQQHQQHQQHQQSHQQ). Residues 1072 to 1082 (QPNQQVSFDTN) are compositionally biased toward polar residues. Residues 1125–1189 (IQQIQQLQQQ…QQQQQQQQND (65 aa)) adopt a coiled-coil conformation. Positions 1202 to 1271 (SKRDNSYNKR…NSRDNNRYNN (70 aa)) are enriched in basic and acidic residues. A compositionally biased stretch (low complexity) spans 1272 to 1282 (RDNNNNNNSNN). Composition is skewed to basic and acidic residues over residues 1283 to 1301 (NRERDRYKKNKNENFDYGK) and 1313 to 1326 (NKDKPNIVREKPDF). The span at 1331 to 1347 (SLKNDSSSNYGTISSGR) shows a compositional bias: polar residues. Residues 1399-1463 (FLFGRNRDIA…NGTFLKGEKI (65 aa)) form the FHA domain.

It belongs to the protein kinase superfamily. CAMK Ser/Thr protein kinase family. SNF1 subfamily.

It carries out the reaction L-seryl-[protein] + ATP = O-phospho-L-seryl-[protein] + ADP + H(+). The enzyme catalyses L-threonyl-[protein] + ATP = O-phospho-L-threonyl-[protein] + ADP + H(+). The sequence is that of Probable serine/threonine-protein kinase DDB_G0280133 from Dictyostelium discoideum (Social amoeba).